Reading from the N-terminus, the 307-residue chain is Pantothenate kinase (307 aa).

90-97 (GSVAVGKS) provides a ligand contact to ATP.

The protein belongs to the prokaryotic pantothenate kinase family.

Its subcellular location is the cytoplasm. It carries out the reaction (R)-pantothenate + ATP = (R)-4'-phosphopantothenate + ADP + H(+). The protein operates within cofactor biosynthesis; coenzyme A biosynthesis; CoA from (R)-pantothenate: step 1/5. This chain is Pantothenate kinase, found in Levilactobacillus brevis (strain ATCC 367 / BCRC 12310 / CIP 105137 / JCM 1170 / LMG 11437 / NCIMB 947 / NCTC 947) (Lactobacillus brevis).